A 197-amino-acid chain; its full sequence is Glycerol-3-phosphate acyltransferase (197 aa).

The next 4 helical transmembrane spans lie at 1–21, 78–98, 112–132, and 155–175; these read MNFL…FAIV, PVEA…SVFL, VLAG…LAVA, and VLLG…ILVW.

Belongs to the PlsY family. In terms of assembly, probably interacts with PlsX.

The protein resides in the cell inner membrane. It carries out the reaction an acyl phosphate + sn-glycerol 3-phosphate = a 1-acyl-sn-glycero-3-phosphate + phosphate. It participates in lipid metabolism; phospholipid metabolism. Catalyzes the transfer of an acyl group from acyl-phosphate (acyl-PO(4)) to glycerol-3-phosphate (G3P) to form lysophosphatidic acid (LPA). This enzyme utilizes acyl-phosphate as fatty acyl donor, but not acyl-CoA or acyl-ACP. This Aromatoleum aromaticum (strain DSM 19018 / LMG 30748 / EbN1) (Azoarcus sp. (strain EbN1)) protein is Glycerol-3-phosphate acyltransferase.